An 82-amino-acid chain; its full sequence is uncharacterized protein (82 aa).

3 consecutive transmembrane segments (helical) span residues 4–26 (LDIA…TCIC), 31–48 (LMPM…FTIF), and 52–74 (FLGW…LIVV).

The protein localises to the cell membrane. This is an uncharacterized protein from Bacillus subtilis (strain 168).